The primary structure comprises 339 residues: Heat-inducible transcription repressor HrcA (339 aa).

The protein belongs to the HrcA family.

In terms of biological role, negative regulator of class I heat shock genes (grpE-dnaK-dnaJ and groELS operons). Prevents heat-shock induction of these operons. The sequence is that of Heat-inducible transcription repressor HrcA from Clostridium perfringens (strain SM101 / Type A).